Reading from the N-terminus, the 299-residue chain is Lysine exporter LysO (299 aa).

Helical transmembrane passes span 1 to 21, 31 to 51, 58 to 78, 109 to 129, 131 to 151, 169 to 189, 207 to 227, and 277 to 297; these read MFSGLLIILVPLIVGYLIPLR, QLLSWMVYLILFFMGISLAFL, LLAILHYSAVSITVILLCNIA, LKLCGVVVIGFAIGLSGLAFL, HATEASEYTLILLLFLVGIQL, IVAVVVVVSSLIGGLINAFIL, SLSGILLTESFGPVIGSAAFF, and PAAIVHGFILSLLVPILIAFF.

The protein belongs to the LysO family.

It is found in the cell inner membrane. In terms of biological role, mediates export of lysine. The sequence is that of Lysine exporter LysO from Escherichia coli (strain K12).